Here is a 433-residue protein sequence, read N- to C-terminus: Enolase (433 aa).

Gln-167 is a (2R)-2-phosphoglycerate binding site. The Proton donor role is filled by Glu-209. Mg(2+)-binding residues include Asp-246, Glu-291, and Asp-318. Residues Lys-343, Arg-372, Ser-373, and Lys-394 each contribute to the (2R)-2-phosphoglycerate site. The active-site Proton acceptor is Lys-343.

Belongs to the enolase family. As to quaternary structure, component of the RNA degradosome, a multiprotein complex involved in RNA processing and mRNA degradation. Requires Mg(2+) as cofactor.

The protein localises to the cytoplasm. It localises to the secreted. Its subcellular location is the cell surface. The catalysed reaction is (2R)-2-phosphoglycerate = phosphoenolpyruvate + H2O. The protein operates within carbohydrate degradation; glycolysis; pyruvate from D-glyceraldehyde 3-phosphate: step 4/5. In terms of biological role, catalyzes the reversible conversion of 2-phosphoglycerate (2-PG) into phosphoenolpyruvate (PEP). It is essential for the degradation of carbohydrates via glycolysis. This Histophilus somni (strain 129Pt) (Haemophilus somnus) protein is Enolase.